A 221-amino-acid polypeptide reads, in one-letter code: Protein Thf1 (221 aa).

Positions 174 to 213 (TKERVEKDVNLYKSSLDKIEKALELIEMNIKDEKRRNKER) form a coiled coil.

The protein belongs to the THF1 family.

Its function is as follows. May be involved in photosynthetic membrane biogenesis. This is Protein Thf1 from Prochlorococcus marinus (strain MIT 9211).